The chain runs to 62 residues: Potassium channel toxin alpha-KTx 22.1 (62 aa).

The first 18 residues, Met-1 to Ala-18, serve as a signal peptide directing secretion. 3 cysteine pairs are disulfide-bonded: Cys-28–Cys-46, Cys-33–Cys-59, and Cys-37–Cys-61.

This sequence belongs to the short scorpion toxin superfamily. Potassium channel inhibitor family. Alpha-KTx 22 subfamily. In terms of tissue distribution, expressed by the venom gland.

The protein localises to the secreted. Functionally, may block potassium channels. This chain is Potassium channel toxin alpha-KTx 22.1, found in Olivierus martensii (Manchurian scorpion).